Reading from the N-terminus, the 487-residue chain is RCC1 repeat-containing protein DDB_G0284033 (487 aa).

RCC1 repeat units lie at residues 66-127 (SNKV…FSGY), 207-259 (RSLI…ALSN), 260-313 (DGKL…ALTS), 373-426 (NGNI…IVET), and 428-483 (DGRF…SLNS).

The chain is RCC1 repeat-containing protein DDB_G0284033 from Dictyostelium discoideum (Social amoeba).